Consider the following 401-residue polypeptide: Chalcone synthase 1 (401 aa).

Cysteine 168 is a catalytic residue.

It belongs to the thiolase-like superfamily. Chalcone/stilbene synthases family.

The catalysed reaction is (E)-4-coumaroyl-CoA + 3 malonyl-CoA + 3 H(+) = 2',4,4',6'-tetrahydroxychalcone + 3 CO2 + 4 CoA. Its pathway is secondary metabolite biosynthesis; flavonoid biosynthesis. The primary product of this enzyme is 4,2',4',6'-tetrahydroxychalcone (also termed naringenin-chalcone or chalcone) which can under specific conditions spontaneously isomerize into naringenin. The sequence is that of Chalcone synthase 1 (CHS1) from Sorghum bicolor (Sorghum).